The sequence spans 1058 residues: MPKRTDIKKIMVIGSGPIVIGQAAEFDYAGTQACLALKEEGYEVVLVNSNPATIMTDKEIADRVYIEPLTTEFVSRILRKERPDALLPTLGGQTGLNLAMSLSETGILNELGVELLGTKLSAINQAEDREQFKALMKALKQPIPESDIVHSVEEALLFASQIGYPVIVRPAFTLGGTGGGICTNDIELEDITAKGLKLSPVNQCLIEKSIAGFKEIEYEVMRDSADNALVVCNMENFDPVGIHTGDSIVFAPSQTLSDYEHQLLRDASLKIIRALKIEGGCNVQLALDPNSFDYYVIEVNPRVSRSSALASKATGYPIAKIAAKIAIGLQLDEMINPITGKTYAMFEPALDYVVAKMPRFPFDKFESADRHLGTQMKATGEVMAIGRTIEESLLKACRSLEIGIYHNECKEFSLVDDQELLMKLIKAQDDRLFYLSEALKRGMTIDELSQLTKINPFFLDKLLHILEIERQLSLEKWQKWPLEHAKKYGFSDKKIAELWQASESDIRDFRIQHGIKPVYKMVDTCAAEFESQTPYYYSTYAFENESQASPNKSILVLGSGPIRIGQGIEFDYATVHSVKAIQAAGYEAIIMNSNPETVSTDFSISDKLYFEPLTVEDVMNVIDLERPEGVILQFGGQTAINLAEALDKANVPILGTQVRDLDRAENRQLFEKALHDINIPQPLGQTVTNEQEALQVARRIGFPVLVRPSYVIGGRAMQIVTQEEDLLTYMQSAVKVSSDQPVLIDSYILGQECEVDAISDGQDVLIPGIMEHIEAAGVHSGDSMAVYPPQNLSEDIIQTIIDYTKRLAINLNCKGMMNIQFVVKDKTVYVIEVNPRASRTVPFMSKVTGIPMAQVATKLILGSSLKELGYEDGLYQKSSLVHVKAPIFSFNKLSKVDSLLGPEMKSTGEVIGSDSSLEKALYKAFEASYMHVPDFGNIIFTISDDKKAESLRLAKGFSALGYRIFATSGTSDYFLQHQLKTQKIHKIGEQSDHILELMKSGKIQAVINTDSKNGMMNRDGQLIRSIANEQGIPLFTSLDTAKAMLRVLESRSFSIQSL.

A carboxyphosphate synthetic domain region spans residues 1 to 401; the sequence is MPKRTDIKKI…SLLKACRSLE (401 aa). Residues R129, R169, G175, G176, K208, I210, E215, G241, I242, H243, Q284, and E298 each contribute to the ATP site. Positions 133–327 constitute an ATP-grasp 1 domain; the sequence is KALMKALKQP…IAKIAAKIAI (195 aa). Mg(2+) is bound by residues Q284, E298, and N300. Residues Q284, E298, and N300 each coordinate Mn(2+). An oligomerization domain region spans residues 402–546; sequence IGIYHNECKE…YSTYAFENES (145 aa). A carbamoyl phosphate synthetic domain region spans residues 547–929; it reads QASPNKSILV…ALYKAFEASY (383 aa). Residues 671-861 enclose the ATP-grasp 2 domain; sequence EKALHDINIP…MAQVATKLIL (191 aa). R707, S746, I748, E752, G777, V778, H779, S780, Q820, and E832 together coordinate ATP. Residues Q820, E832, and N834 each coordinate Mg(2+). Residues Q820, E832, and N834 each contribute to the Mn(2+) site. The MGS-like domain maps to 930–1058; that stretch reads MHVPDFGNII…ESRSFSIQSL (129 aa). Residues 930-1058 are allosteric domain; sequence MHVPDFGNII…ESRSFSIQSL (129 aa).

Belongs to the CarB family. Composed of two chains; the small (or glutamine) chain promotes the hydrolysis of glutamine to ammonia, which is used by the large (or ammonia) chain to synthesize carbamoyl phosphate. Tetramer of heterodimers (alpha,beta)4. Mg(2+) is required as a cofactor. The cofactor is Mn(2+).

The catalysed reaction is hydrogencarbonate + L-glutamine + 2 ATP + H2O = carbamoyl phosphate + L-glutamate + 2 ADP + phosphate + 2 H(+). It carries out the reaction hydrogencarbonate + NH4(+) + 2 ATP = carbamoyl phosphate + 2 ADP + phosphate + 2 H(+). Its pathway is amino-acid biosynthesis; L-arginine biosynthesis; carbamoyl phosphate from bicarbonate: step 1/1. The protein operates within pyrimidine metabolism; UMP biosynthesis via de novo pathway; (S)-dihydroorotate from bicarbonate: step 1/3. Functionally, large subunit of the glutamine-dependent carbamoyl phosphate synthetase (CPSase). CPSase catalyzes the formation of carbamoyl phosphate from the ammonia moiety of glutamine, carbonate, and phosphate donated by ATP, constituting the first step of 2 biosynthetic pathways, one leading to arginine and/or urea and the other to pyrimidine nucleotides. The large subunit (synthetase) binds the substrates ammonia (free or transferred from glutamine from the small subunit), hydrogencarbonate and ATP and carries out an ATP-coupled ligase reaction, activating hydrogencarbonate by forming carboxy phosphate which reacts with ammonia to form carbamoyl phosphate. The polypeptide is Carbamoyl phosphate synthase large chain (Streptococcus uberis (strain ATCC BAA-854 / 0140J)).